The sequence spans 165 residues: 2-C-methyl-D-erythritol 2,4-cyclodiphosphate synthase (165 aa).

A divalent metal cation-binding residues include Asp-8 and His-10. Residues 8 to 10 (DVH) and 34 to 35 (HS) contribute to the 4-CDP-2-C-methyl-D-erythritol 2-phosphate site. His-42 contacts a divalent metal cation. 4-CDP-2-C-methyl-D-erythritol 2-phosphate contacts are provided by residues 56–58 (DIG), 61–65 (FPDTD), 132–135 (TTTE), Phe-139, and Arg-142.

This sequence belongs to the IspF family. Homotrimer. A divalent metal cation is required as a cofactor.

It carries out the reaction 4-CDP-2-C-methyl-D-erythritol 2-phosphate = 2-C-methyl-D-erythritol 2,4-cyclic diphosphate + CMP. It participates in isoprenoid biosynthesis; isopentenyl diphosphate biosynthesis via DXP pathway; isopentenyl diphosphate from 1-deoxy-D-xylulose 5-phosphate: step 4/6. Involved in the biosynthesis of isopentenyl diphosphate (IPP) and dimethylallyl diphosphate (DMAPP), two major building blocks of isoprenoid compounds. Catalyzes the conversion of 4-diphosphocytidyl-2-C-methyl-D-erythritol 2-phosphate (CDP-ME2P) to 2-C-methyl-D-erythritol 2,4-cyclodiphosphate (ME-CPP) with a corresponding release of cytidine 5-monophosphate (CMP). The sequence is that of 2-C-methyl-D-erythritol 2,4-cyclodiphosphate synthase from Halothermothrix orenii (strain H 168 / OCM 544 / DSM 9562).